Reading from the N-terminus, the 308-residue chain is N-acetylgalactosamine kinase AgaK (308 aa).

ATP contacts are provided by residues 4 to 11 (GLDIGGTK) and 132 to 139 (GTGGGLCI). Positions 156, 174, 176, and 181 each coordinate Zn(2+).

This sequence belongs to the ROK (NagC/XylR) family.

Its subcellular location is the cytoplasm. The catalysed reaction is N-acetyl-D-galactosamine + ATP = N-acetyl-D-galactosamine 6-phosphate + ADP + H(+). It carries out the reaction N-acetyl-D-glucosamine + ATP = N-acetyl-D-glucosamine 6-phosphate + ADP + H(+). Its function is as follows. Involved in the pathway of N-acetyl-D-galactosamine degradation. Catalyzes the phosphorylation of N-acetyl-D-galactosamine (GalNAc) to yield D-galactosamine 6-phosphate (GalN-6-P). It can also phosphorylate N-acetylglucosamine (GlcNAc). The protein is N-acetylgalactosamine kinase AgaK of Shewanella sp. (strain ANA-3).